Here is a 265-residue protein sequence, read N- to C-terminus: Short chain dehydrogenase mdpC (265 aa).

Isoleucine 25, asparagine 98, and arginine 131 together coordinate NADP(+). Catalysis depends on proton donor residues serine 147 and serine 148. 3 residues coordinate NADP(+): tyrosine 162, lysine 166, and threonine 197. Catalysis depends on tyrosine 162, which acts as the Proton acceptor. Lysine 166 serves as the catalytic Lowers pKa of active site Tyr.

It belongs to the short-chain dehydrogenases/reductases (SDR) family.

The enzyme catalyses 3,8,9,10-tetrahydroxy-6-methyl-1,4-dihydroanthracen-1-one + NADPH + H(+) = (3R)-3,8,9,10-tetrahydroxy-6-methyl-1,2,3,4-tetrahydroanthracen-1-one + NADP(+). Its pathway is secondary metabolite biosynthesis. In terms of biological role, short chain dehydrogenase; part of the gene cluster that mediates the biosynthesis of monodictyphenone, a prenyl xanthone derivative. The pathway begins with the synthesis of atrochrysone thioester by the polyketide synthase (PKS) mdpG. The atrochrysone carboxyl ACP thioesterase mdpF then breaks the thioester bond and releases the atrochrysone carboxylic acid from mdpG. The atrochrysone carboxylic acid is then converted to atrochrysone which is further transformed into emodin anthrone. The next step is performed by the anthrone oxygenase mdpH that catalyzes the oxidation of emodinanthrone to emodin. Emodin is further modified to yield monodictyphenone via several steps involving mdpB, mdpC mdpJ, mdpK and mdpL. The short chain dehydrogenase mdpC converts the tautomers of emodin hydroquinone into the 3-hydroxy-3,4-dihydroan-thracen-1(2H)-one derivative. These enzymes with xptA, xptB and xptC are also proposed to be involved in the synthesis of shamixanthone from emodin. Especially, direct reduction of emodin by the short chain dehydrogenase mdpC followed by dehydration catalyzed by the scytalone dehydratase-like protein mdpB gives loss of oxygen and formation of chrysophanol intermediate in two simple steps. The sequence is that of Short chain dehydrogenase mdpC from Emericella nidulans (strain FGSC A4 / ATCC 38163 / CBS 112.46 / NRRL 194 / M139) (Aspergillus nidulans).